The primary structure comprises 327 residues: Lactosylceramide 4-alpha-galactosyltransferase (327 aa).

The DXD motif signature appears at 166–168 (DTD).

This sequence belongs to the glycosyltransferase 32 family.

Its subcellular location is the golgi apparatus membrane. The enzyme catalyses a beta-D-Gal-(1-&gt;4)-beta-D-Glc-(1&lt;-&gt;1)-Cer(d18:1(4E)) + UDP-alpha-D-galactose = a globoside Gb3Cer (d18:1(4E)) + UDP + H(+). It carries out the reaction a beta-D-Gal-(1&lt;-&gt;1')-ceramide + UDP-alpha-D-galactose = alpha-D-Gal-(1-&gt;4)-beta-D-Gal-(1&lt;-&gt;1')-Cer + UDP + H(+). Its pathway is glycolipid biosynthesis. Catalyzes the transfer of galactose from UDP-alpha-D-galactose to lactosylceramide/beta-D-galactosyl-(1-&gt;4)-beta-D-glucosyl-(1&lt;-&gt;1)-ceramide(d18:1(4E)) to produce globotriaosylceramide/globoside Gb3Cer (d18:1(4E)). Also able to transfer galactose to galactosylceramide/beta-D-Gal-(1&lt;-&gt;1')-Cer. Globoside Gb3Cer is a glycosphingolipid of the globo serie, one of the major types of neutral root structures of glycosphingolipids, that constitute a significant portion of mammalian cell membranes. This chain is Lactosylceramide 4-alpha-galactosyltransferase (A4GALT), found in Gorilla gorilla gorilla (Western lowland gorilla).